A 112-amino-acid chain; its full sequence is Large ribosomal subunit protein eL30 (112 aa).

The protein belongs to the eukaryotic ribosomal protein eL30 family.

The polypeptide is Large ribosomal subunit protein eL30 (RPL30) (Euphorbia esula (Leafy spurge)).